We begin with the raw amino-acid sequence, 814 residues long: Exostosin-like-3 homolog (814 aa).

The Cytoplasmic segment spans residues Met-1–Pro-14. A helical; Signal-anchor for type II membrane protein transmembrane segment spans residues Ser-15–Tyr-35. Residues Asn-36, Asn-227, Asn-297, Asn-322, Asn-454, and Asn-492 are each glycosylated (N-linked (GlcNAc...) asparagine). The Lumenal segment spans residues Asn-36–Val-814. UDP-N-acetyl-alpha-D-glucosamine is bound by residues Arg-570, Asn-595, Asn-620, Arg-625, Asp-641, Asp-642, and Asp-643. Mn(2+) is bound at residue Asp-643. The N-linked (GlcNAc...) asparagine glycan is linked to Asn-685. A disulfide bond links Cys-726 and Cys-774. Glu-727, Asp-728, and Arg-771 together coordinate UDP-N-acetyl-alpha-D-glucosamine. Asp-728 is an active-site residue.

This sequence belongs to the glycosyltransferase 47 family. As to quaternary structure, interacts with rib-1. Mn(2+) serves as cofactor.

It is found in the endoplasmic reticulum membrane. The protein resides in the golgi apparatus membrane. It catalyses the reaction 3-O-(beta-D-GlcA-(1-&gt;3)-beta-D-Gal-(1-&gt;3)-beta-D-Gal-(1-&gt;4)-beta-D-Xyl)-L-seryl-[protein] + UDP-N-acetyl-alpha-D-glucosamine = 3-O-(alpha-D-GlcNAc-(1-&gt;4)-beta-D-GlcA-(1-&gt;3)-beta-D-Gal-(1-&gt;3)-beta-D-Gal-(1-&gt;4)-beta-D-Xyl)-L-seryl-[protein] + UDP + H(+). The enzyme catalyses 3-O-{[(1-&gt;4)-beta-D-GlcA-(1-&gt;4)-alpha-D-GlcNAc](n)-(1-&gt;4)-beta-D-GlcA-(1-&gt;3)-beta-D-Gal-(1-&gt;3)-beta-D-Gal-(1-&gt;4)-beta-D-Xyl}-L-seryl-[protein] + UDP-N-acetyl-alpha-D-glucosamine = 3-O-{alpha-D-GlcNAc-[(1-&gt;4)-beta-D-GlcA-(1-&gt;4)-alpha-D-GlcNAc](n)-(1-&gt;4)-beta-D-GlcA-(1-&gt;3)-beta-D-Gal-(1-&gt;3)-beta-D-Gal-(1-&gt;4)-beta-D-Xyl}-L-seryl-[protein] + UDP + H(+). The catalysed reaction is 3-O-{alpha-D-GlcNAc-[(1-&gt;4)-beta-D-GlcA-(1-&gt;4)-alpha-D-GlcNAc](n)-(1-&gt;4)-beta-D-GlcA-(1-&gt;3)-beta-D-Gal-(1-&gt;3)-beta-D-Gal-(1-&gt;4)-beta-D-Xyl}-L-seryl-[protein] + UDP-alpha-D-glucuronate = 3-O-{[(1-&gt;4)-beta-D-GlcA-(1-&gt;4)-alpha-D-GlcNAc](n+1)-(1-&gt;4)-beta-D-GlcA-(1-&gt;3)-beta-D-Gal-(1-&gt;3)-beta-D-Gal-(1-&gt;4)-beta-D-Xyl}-L-seryl-[protein] + UDP + H(+). It participates in glycan metabolism; heparan sulfate biosynthesis. Its activity is regulated as follows. Binding to rib-1 is required for GlcAT-II activity and for increasing GlcNAc-II activity in vitro. Glycosyltransferase required for the biosynthesis of heparan sulfate. Initiates heparan sulfate synthesis by transferring GlcNAc to the (GlcA-Gal-Gal-Xyl-)Ser core linker (GlcNAcT-I activity). In association with rib-1, is also responsible for the alternating addition of beta-1-4-linked glucuronic acid (GlcA) and alpha-1-4-linked N-acetylglucosamine (GlcNAc) units to nascent heparan sulfate chains (GlcNAcT-II and GlcAT-II activities). Required for normal ventral epidermal enclosure during the early stages of embryonic development. In addition, involved in the elongation of the pharyngeal isthmus during the later stages of embryonic development. Involved in the directed migration of hermaphrodite-specific neurons. This Caenorhabditis elegans protein is Exostosin-like-3 homolog (rib-2).